Reading from the N-terminus, the 244-residue chain is Putative esophageal gland cell secretory protein 6 (244 aa).

A signal peptide spans Met1–Ser22. An intrachain disulfide couples Cys88 to Cys91.

The protein belongs to the SelWTH family. SELT subfamily.

This is Putative esophageal gland cell secretory protein 6 (HSP6) from Heterodera glycines (Soybean cyst nematode worm).